Here is a 101-residue protein sequence, read N- to C-terminus: Small ribosomal subunit protein uS14 (101 aa).

The protein belongs to the universal ribosomal protein uS14 family. In terms of assembly, part of the 30S ribosomal subunit. Contacts proteins S3 and S10.

Its function is as follows. Binds 16S rRNA, required for the assembly of 30S particles and may also be responsible for determining the conformation of the 16S rRNA at the A site. The protein is Small ribosomal subunit protein uS14 of Bartonella henselae (strain ATCC 49882 / DSM 28221 / CCUG 30454 / Houston 1) (Rochalimaea henselae).